We begin with the raw amino-acid sequence, 207 residues long: LysM and putative peptidoglycan-binding domain-containing protein 2 (207 aa).

In terms of domain architecture, LysM spans 61-105; the sequence is IEHRLSPSDTLQGIALKYGVTMEQIKRANKLFSTDCIFLRKSLNI. The interval 186–207 is disordered; it reads AQRLKEEDLRHDDSYATCSYQH. The segment covering 188–199 has biased composition (basic and acidic residues); that stretch reads RLKEEDLRHDDS.

This chain is LysM and putative peptidoglycan-binding domain-containing protein 2 (lysmd2), found in Xenopus tropicalis (Western clawed frog).